The sequence spans 252 residues: D-aminoacyl-tRNA deacylase (252 aa).

Belongs to the DtdA deacylase family. As to quaternary structure, monomer. Requires Zn(2+) as cofactor.

The catalysed reaction is a D-aminoacyl-tRNA + H2O = a tRNA + a D-alpha-amino acid + H(+). It carries out the reaction glycyl-tRNA(Ala) + H2O = tRNA(Ala) + glycine + H(+). D-aminoacyl-tRNA deacylase with broad substrate specificity. By recycling D-aminoacyl-tRNA to D-amino acids and free tRNA molecules, this enzyme counteracts the toxicity associated with the formation of D-aminoacyl-tRNA entities in vivo. In Pyrobaculum neutrophilum (strain DSM 2338 / JCM 9278 / NBRC 100436 / V24Sta) (Thermoproteus neutrophilus), this protein is D-aminoacyl-tRNA deacylase.